The chain runs to 219 residues: Peptidyl-tRNA hydrolase (219 aa).

TRNA is bound at residue Y26. H31 serves as the catalytic Proton acceptor. Residues Y78, N80, and N126 each contribute to the tRNA site.

Belongs to the PTH family. Monomer.

It localises to the cytoplasm. It catalyses the reaction an N-acyl-L-alpha-aminoacyl-tRNA + H2O = an N-acyl-L-amino acid + a tRNA + H(+). Hydrolyzes ribosome-free peptidyl-tRNAs (with 1 or more amino acids incorporated), which drop off the ribosome during protein synthesis, or as a result of ribosome stalling. Its function is as follows. Catalyzes the release of premature peptidyl moieties from peptidyl-tRNA molecules trapped in stalled 50S ribosomal subunits, and thus maintains levels of free tRNAs and 50S ribosomes. The chain is Peptidyl-tRNA hydrolase from Trichodesmium erythraeum (strain IMS101).